A 461-amino-acid polypeptide reads, in one-letter code: Cysteine--tRNA ligase (461 aa).

Residue C28 coordinates Zn(2+). The 'HIGH' region motif lies at 30–40 (ITVYDLCHIGH). Residues C209, H234, and E238 each contribute to the Zn(2+) site. The 'KMSKS' region motif lies at 266–270 (KMSKS). K269 serves as a coordination point for ATP.

It belongs to the class-I aminoacyl-tRNA synthetase family. In terms of assembly, monomer. The cofactor is Zn(2+).

The protein resides in the cytoplasm. The enzyme catalyses tRNA(Cys) + L-cysteine + ATP = L-cysteinyl-tRNA(Cys) + AMP + diphosphate. This is Cysteine--tRNA ligase from Shigella boydii serotype 18 (strain CDC 3083-94 / BS512).